The following is a 717-amino-acid chain: ATP-dependent zinc metalloprotease FtsH (717 aa).

The Cytoplasmic segment spans residues 1 to 9 (MKNASRIFK). Residues 10-30 (GPLIWILLCIGLIIVFLQFAG) traverse the membrane as a helical segment. Residues 31 to 111 (SGNGYKDIPT…SWQGENPGQS (81 aa)) are Extracellular-facing. The helical transmembrane segment at 112-132 (IWKALLINFLPFVIILLFFLW) threads the bilayer. At 133 to 717 (AMNAAQGMGG…NGNPWGPPRS (585 aa)) the chain is on the cytoplasmic side. 207–214 (GPPGTGKT) serves as a coordination point for ATP. Residue His429 coordinates Zn(2+). The active site involves Glu430. Positions 433 and 505 each coordinate Zn(2+). The segment at 617 to 717 (AFTGSDKRVP…NGNPWGPPRS (101 aa)) is disordered. Over residues 691-717 (PEPPSPTHPGEGPQPPSNGNPWGPPRS) the composition is skewed to pro residues.

In the central section; belongs to the AAA ATPase family. This sequence in the C-terminal section; belongs to the peptidase M41 family. As to quaternary structure, homohexamer. Requires Zn(2+) as cofactor.

Its subcellular location is the cell membrane. In terms of biological role, acts as a processive, ATP-dependent zinc metallopeptidase for both cytoplasmic and membrane proteins. Plays a role in the quality control of integral membrane proteins. In Cutibacterium acnes (strain SK137) (Propionibacterium acnes), this protein is ATP-dependent zinc metalloprotease FtsH.